The primary structure comprises 217 residues: MNATTAPLPYSAARLHELAQLLIGNIRELAQAGWTPATSSNFSHRLDEQHAAITVSGRDKGRLVEEDIMVVDFDGQPVGRPLRPSAETLLHTQLYRRFPEIGCVLHTHSPVQTIASRLYAGSGVIRLEGYELLKAFEGNTTHETAVDVLVFANTQDMQVLAAQVEALLDKQSMWGYLIEGHGLYAWGRNMAEARRHLEAFEFLLHCELELLKLRSPR.

Zn(2+)-binding residues include H106 and H108.

The protein belongs to the aldolase class II family. MtnB subfamily. It depends on Zn(2+) as a cofactor.

The catalysed reaction is 5-(methylsulfanyl)-D-ribulose 1-phosphate = 5-methylsulfanyl-2,3-dioxopentyl phosphate + H2O. Its pathway is amino-acid biosynthesis; L-methionine biosynthesis via salvage pathway; L-methionine from S-methyl-5-thio-alpha-D-ribose 1-phosphate: step 2/6. Functionally, catalyzes the dehydration of methylthioribulose-1-phosphate (MTRu-1-P) into 2,3-diketo-5-methylthiopentyl-1-phosphate (DK-MTP-1-P). This Xanthomonas campestris pv. campestris (strain B100) protein is Methylthioribulose-1-phosphate dehydratase.